Reading from the N-terminus, the 333-residue chain is MALRWGIVSAGLIANDFTTVLSSLPSSEHQVVAVAARDLNRAEEFAQKFNIPKAYGSYEELAKDPNVEVAYIATQHPQHKPAVLLCLAAGKAVLCEKPMGVNAAEVREMVAKARSQGVFLMEAIWSRFFPAMEALREVLVQGTIGDLRVARAEFGFDLSHIPRATDWNQAGGGLLDLGIYCVQFLSMIFGAQKPEKISAVGRIHETGVDDTVSVLLQYPGGVHGSFTCSISSNLPNTAYVSGTKGMAQIQKLWAPTELVVNGERKEFPPPVLGKDYNFVNGSCMLYEANHVRECLRKGLKESPVVPLAESELLAEILEEARKAIGVTFPQDKR.

Belongs to the Gfo/Idh/MocA family. Homodimer.

It catalyses the reaction (1R,2R)-1,2-dihydrobenzene-1,2-diol + NADP(+) = catechol + NADPH + H(+). The enzyme catalyses D-xylose + NADP(+) = D-xylono-1,5-lactone + NADPH + H(+). The polypeptide is Trans-1,2-dihydrobenzene-1,2-diol dehydrogenase (Dhdh) (Mus musculus (Mouse)).